A 392-amino-acid polypeptide reads, in one-letter code: Enoyl-[acyl-carrier-protein] reductase [NADH] (392 aa).

NAD(+) is bound by residues 48-53 (GCSTGY), 74-75 (FE), 111-112 (DA), and 139-140 (LA). Tyr-225 contributes to the substrate binding site. The active-site Proton donor is the Tyr-235. NAD(+)-binding positions include Lys-244 and 273–275 (LVT).

Belongs to the TER reductase family. As to quaternary structure, monomer.

The catalysed reaction is a 2,3-saturated acyl-[ACP] + NAD(+) = a (2E)-enoyl-[ACP] + NADH + H(+). Its pathway is lipid metabolism; fatty acid biosynthesis. Functionally, involved in the final reduction of the elongation cycle of fatty acid synthesis (FAS II). Catalyzes the reduction of a carbon-carbon double bond in an enoyl moiety that is covalently linked to an acyl carrier protein (ACP). The sequence is that of Enoyl-[acyl-carrier-protein] reductase [NADH] from Idiomarina loihiensis (strain ATCC BAA-735 / DSM 15497 / L2-TR).